Here is a 106-residue protein sequence, read N- to C-terminus: Tapetal oleosin GRP-19 (106 aa).

3 consecutive transmembrane segments (helical) span residues 14 to 34 (ALAL…ACII), 37 to 57 (PLFV…TLLA), and 58 to 78 (SGFT…SWLY). The interval 84–106 (RDLPKIPGLTPPAPASNPAGSGV) is disordered.

Belongs to the oleosin family. In terms of processing, proteolytically cleaved following anther tapetal breakdown. As to expression, present in pollen (at protein level). Inflorescence-specific expression, especially in flowers florets.

It localises to the secreted. The protein resides in the extracellular space. Its subcellular location is the extracellular matrix. It is found in the pollen coat. The protein localises to the lipid droplet. It localises to the membrane. Functionally, lipid-binding oleosin involved in anther tapetum development, especially for the physiology of tapetosomes. Also implicated in the formation of pollen coat. This is Tapetal oleosin GRP-19 from Arabidopsis thaliana (Mouse-ear cress).